The chain runs to 356 residues: Protein MGF 360-19R (356 aa).

Residues 61–93 (LLNTALMKAVQENNYELIMLFTEWGANINYGLL) form an ANK repeat.

The protein belongs to the asfivirus MGF 360 family.

Its function is as follows. Plays a role in virus cell tropism, and may be required for efficient virus replication in macrophages. This African swine fever virus (isolate Pig/Kenya/KEN-50/1950) (ASFV) protein is Protein MGF 360-19R.